The chain runs to 247 residues: UPF0659 protein C216.03 (247 aa).

The protein belongs to the UPF0659 family.

The protein resides in the cytoplasm. Its subcellular location is the nucleus. The protein is UPF0659 protein C216.03 of Schizosaccharomyces pombe (strain 972 / ATCC 24843) (Fission yeast).